Here is a 513-residue protein sequence, read N- to C-terminus: 2-isopropylmalate synthase (513 aa).

The region spanning 5–268 is the Pyruvate carboxyltransferase domain; that stretch reads LIIFDTTLRD…DVGVDTSQIV (264 aa). Mn(2+)-binding residues include Asp14, His202, His204, and Asn239. The tract at residues 394–513 is regulatory domain; the sequence is RFISLSQRSE…KAVQKINPQI (120 aa).

It belongs to the alpha-IPM synthase/homocitrate synthase family. LeuA type 1 subfamily. Homodimer. Mn(2+) is required as a cofactor.

The protein localises to the cytoplasm. It catalyses the reaction 3-methyl-2-oxobutanoate + acetyl-CoA + H2O = (2S)-2-isopropylmalate + CoA + H(+). It functions in the pathway amino-acid biosynthesis; L-leucine biosynthesis; L-leucine from 3-methyl-2-oxobutanoate: step 1/4. Functionally, catalyzes the condensation of the acetyl group of acetyl-CoA with 3-methyl-2-oxobutanoate (2-ketoisovalerate) to form 3-carboxy-3-hydroxy-4-methylpentanoate (2-isopropylmalate). The chain is 2-isopropylmalate synthase from Cupriavidus pinatubonensis (strain JMP 134 / LMG 1197) (Cupriavidus necator (strain JMP 134)).